Consider the following 96-residue polypeptide: Probable quinol oxidase subunit 4 (96 aa).

3 helical membrane passes run 8–28 (TVGF…TLYT), 36–56 (ITII…MFMH), and 68–88 (FKVL…YWVM).

It belongs to the cytochrome c oxidase bacterial subunit 4 family.

It localises to the cell membrane. It carries out the reaction 2 a quinol + O2 = 2 a quinone + 2 H2O. In terms of biological role, catalyzes quinol oxidation with the concomitant reduction of oxygen to water. This Staphylococcus saprophyticus subsp. saprophyticus (strain ATCC 15305 / DSM 20229 / NCIMB 8711 / NCTC 7292 / S-41) protein is Probable quinol oxidase subunit 4 (qoxD).